Consider the following 272-residue polypeptide: Putative phosphoenolpyruvate synthase regulatory protein (272 aa).

Position 152 to 159 (152 to 159 (GVSRCGKT)) interacts with ADP.

It belongs to the pyruvate, phosphate/water dikinase regulatory protein family. PSRP subfamily.

It catalyses the reaction [pyruvate, water dikinase] + ADP = [pyruvate, water dikinase]-phosphate + AMP + H(+). The catalysed reaction is [pyruvate, water dikinase]-phosphate + phosphate + H(+) = [pyruvate, water dikinase] + diphosphate. In terms of biological role, bifunctional serine/threonine kinase and phosphorylase involved in the regulation of the phosphoenolpyruvate synthase (PEPS) by catalyzing its phosphorylation/dephosphorylation. The polypeptide is Putative phosphoenolpyruvate synthase regulatory protein (Pseudomonas putida (strain ATCC 700007 / DSM 6899 / JCM 31910 / BCRC 17059 / LMG 24140 / F1)).